A 206-amino-acid polypeptide reads, in one-letter code: Recombination protein RecR (206 aa).

The C4-type zinc finger occupies 60 to 75 (CARCNTFCEGGLCDIC). Residues 83–178 (RRLMVVHMPA…KVSRLSQGIP (96 aa)) form the Toprim domain.

Belongs to the RecR family.

May play a role in DNA repair. It seems to be involved in an RecBC-independent recombinational process of DNA repair. It may act with RecF and RecO. This is Recombination protein RecR from Neisseria gonorrhoeae (strain NCCP11945).